A 425-amino-acid polypeptide reads, in one-letter code: MGMSTAVASPVALDSGKLEPLRVMVVDDSVVIRGLISRWIEAEPDMMVAASLRTGRDAVSQVERADPDVVVLDIEMPELDGISALPQLLAKKRNLIVIMASTLTRRNAEISFKALSLGASDYIPKPESTREVAAADIFRHDLMQKIRHLAAKRRRPATVASPPPDHDDYGSNASTIMNAVDSNISERDAGGKPRRTFPHPALVQREQQPRSAQAARAMSRPQPTLRSFSAHLPRALLIGSSTGGPQALMTLVAGIGPVIDRCPVLITQHMPPTFTTILAEHLARAAGRPAHEGVDQEIVKQGHIYLAPGGRHMRVARKGADAVIVLDNGPAVNFCKPAVDPLFMSAIDVWQGGALAVILTGMGSDGMRGGTQIVAAGGSIIAQDEASSVVWGMPGAAVQAGICAAVLPLQQIAPKLVRLFAGDGL.

Positions 22–140 (RVMVVDDSVV…EVAAADIFRH (119 aa)) constitute a Response regulatory domain. The residue at position 73 (D73) is a 4-aspartylphosphate. 2 disordered regions span residues 150–174 (AAKRRRPATVASPPPDHDDYGSNAS) and 203–223 (VQREQQPRSAQAARAMSRPQP). The CheB-type methylesterase domain maps to 221 to 417 (PQPTLRSFSA…PLQQIAPKLV (197 aa)). Catalysis depends on residues S241, H269, and D365.

This sequence belongs to the CheB family. Post-translationally, phosphorylated by CheA. Phosphorylation of the N-terminal regulatory domain activates the methylesterase activity.

Its subcellular location is the cytoplasm. The enzyme catalyses [protein]-L-glutamate 5-O-methyl ester + H2O = L-glutamyl-[protein] + methanol + H(+). It catalyses the reaction L-glutaminyl-[protein] + H2O = L-glutamyl-[protein] + NH4(+). Functionally, involved in chemotaxis. Part of a chemotaxis signal transduction system that modulates chemotaxis in response to various stimuli. Catalyzes the demethylation of specific methylglutamate residues introduced into the chemoreceptors (methyl-accepting chemotaxis proteins or MCP) by CheR. Also mediates the irreversible deamidation of specific glutamine residues to glutamic acid. The polypeptide is Protein-glutamate methylesterase/protein-glutamine glutaminase (Nitrobacter winogradskyi (strain ATCC 25391 / DSM 10237 / CIP 104748 / NCIMB 11846 / Nb-255)).